Reading from the N-terminus, the 133-residue chain is ATP synthase epsilon chain (133 aa).

It belongs to the ATPase epsilon chain family. In terms of assembly, F-type ATPases have 2 components, CF(1) - the catalytic core - and CF(0) - the membrane proton channel. CF(1) has five subunits: alpha(3), beta(3), gamma(1), delta(1), epsilon(1). CF(0) has three main subunits: a, b and c.

It localises to the cell membrane. Produces ATP from ADP in the presence of a proton gradient across the membrane. The sequence is that of ATP synthase epsilon chain from Clostridium botulinum (strain 657 / Type Ba4).